A 200-amino-acid chain; its full sequence is Superoxide dismutase [Mn] 1 (200 aa).

H29, H76, D158, and H162 together coordinate Mn(2+).

This sequence belongs to the iron/manganese superoxide dismutase family. It depends on Mn(2+) as a cofactor.

It carries out the reaction 2 superoxide + 2 H(+) = H2O2 + O2. Its function is as follows. Destroys superoxide anion radicals which are normally produced within the cells and which are toxic to biological systems. This Haloferax volcanii (strain ATCC 29605 / DSM 3757 / JCM 8879 / NBRC 14742 / NCIMB 2012 / VKM B-1768 / DS2) (Halobacterium volcanii) protein is Superoxide dismutase [Mn] 1 (sod1).